Reading from the N-terminus, the 482-residue chain is Glutamyl-tRNA(Gln) amidotransferase subunit A (482 aa).

Catalysis depends on charge relay system residues Lys81 and Ser156. Ser180 functions as the Acyl-ester intermediate in the catalytic mechanism.

The protein belongs to the amidase family. GatA subfamily. As to quaternary structure, heterotrimer of A, B and C subunits.

The enzyme catalyses L-glutamyl-tRNA(Gln) + L-glutamine + ATP + H2O = L-glutaminyl-tRNA(Gln) + L-glutamate + ADP + phosphate + H(+). Functionally, allows the formation of correctly charged Gln-tRNA(Gln) through the transamidation of misacylated Glu-tRNA(Gln) in organisms which lack glutaminyl-tRNA synthetase. The reaction takes place in the presence of glutamine and ATP through an activated gamma-phospho-Glu-tRNA(Gln). The sequence is that of Glutamyl-tRNA(Gln) amidotransferase subunit A from Brachyspira hyodysenteriae (strain ATCC 49526 / WA1).